We begin with the raw amino-acid sequence, 129 residues long: Glycine cleavage system H protein (129 aa).

The Lipoyl-binding domain occupies 24–106; the sequence is VFTVGISEHA…YGDGWLFKIK (83 aa). K65 is subject to N6-lipoyllysine.

It belongs to the GcvH family. The glycine cleavage system is composed of four proteins: P, T, L and H. Requires (R)-lipoate as cofactor.

Its function is as follows. The glycine cleavage system catalyzes the degradation of glycine. The H protein shuttles the methylamine group of glycine from the P protein to the T protein. This chain is Glycine cleavage system H protein, found in Alteromonas mediterranea (strain DSM 17117 / CIP 110805 / LMG 28347 / Deep ecotype).